A 128-amino-acid polypeptide reads, in one-letter code: Small ribosomal subunit protein uS12 (128 aa).

Position 89 is a 3-methylthioaspartic acid (Asp-89).

It belongs to the universal ribosomal protein uS12 family. In terms of assembly, part of the 30S ribosomal subunit. Contacts proteins S8 and S17. May interact with IF1 in the 30S initiation complex.

Functionally, with S4 and S5 plays an important role in translational accuracy. Its function is as follows. Interacts with and stabilizes bases of the 16S rRNA that are involved in tRNA selection in the A site and with the mRNA backbone. Located at the interface of the 30S and 50S subunits, it traverses the body of the 30S subunit contacting proteins on the other side and probably holding the rRNA structure together. The combined cluster of proteins S8, S12 and S17 appears to hold together the shoulder and platform of the 30S subunit. The chain is Small ribosomal subunit protein uS12 from Campylobacter jejuni subsp. doylei (strain ATCC BAA-1458 / RM4099 / 269.97).